The chain runs to 269 residues: Formamidopyrimidine-DNA glycosylase (269 aa).

Pro2 acts as the Schiff-base intermediate with DNA in catalysis. Glu3 functions as the Proton donor in the catalytic mechanism. Catalysis depends on Lys57, which acts as the Proton donor; for beta-elimination activity. 3 residues coordinate DNA: His90, Arg109, and Lys150. The segment at 235–269 (QVYGRKGEPCRVCGTPIVATKHAQRATFYCRQCQK) adopts an FPG-type zinc-finger fold. Residue Arg259 is the Proton donor; for delta-elimination activity of the active site.

The protein belongs to the FPG family. As to quaternary structure, monomer. Zn(2+) serves as cofactor.

The catalysed reaction is Hydrolysis of DNA containing ring-opened 7-methylguanine residues, releasing 2,6-diamino-4-hydroxy-5-(N-methyl)formamidopyrimidine.. It carries out the reaction 2'-deoxyribonucleotide-(2'-deoxyribose 5'-phosphate)-2'-deoxyribonucleotide-DNA = a 3'-end 2'-deoxyribonucleotide-(2,3-dehydro-2,3-deoxyribose 5'-phosphate)-DNA + a 5'-end 5'-phospho-2'-deoxyribonucleoside-DNA + H(+). Functionally, involved in base excision repair of DNA damaged by oxidation or by mutagenic agents. Acts as a DNA glycosylase that recognizes and removes damaged bases. Has a preference for oxidized purines, such as 7,8-dihydro-8-oxoguanine (8-oxoG). Has AP (apurinic/apyrimidinic) lyase activity and introduces nicks in the DNA strand. Cleaves the DNA backbone by beta-delta elimination to generate a single-strand break at the site of the removed base with both 3'- and 5'-phosphates. The sequence is that of Formamidopyrimidine-DNA glycosylase from Shigella dysenteriae serotype 1 (strain Sd197).